The sequence spans 546 residues: ATP synthase subunit alpha (546 aa).

172-179 (GDRKTGKT) contributes to the ATP binding site.

Belongs to the ATPase alpha/beta chains family. F-type ATPases have 2 components, CF(1) - the catalytic core - and CF(0) - the membrane proton channel. CF(1) has five subunits: alpha(3), beta(3), gamma(1), delta(1), epsilon(1). CF(0) has three main subunits: a(1), b(2) and c(9-12). The alpha and beta chains form an alternating ring which encloses part of the gamma chain. CF(1) is attached to CF(0) by a central stalk formed by the gamma and epsilon chains, while a peripheral stalk is formed by the delta and b chains.

It is found in the cell membrane. The enzyme catalyses ATP + H2O + 4 H(+)(in) = ADP + phosphate + 5 H(+)(out). In terms of biological role, produces ATP from ADP in the presence of a proton gradient across the membrane. The alpha chain is a regulatory subunit. This chain is ATP synthase subunit alpha, found in Corynebacterium efficiens (strain DSM 44549 / YS-314 / AJ 12310 / JCM 11189 / NBRC 100395).